A 394-amino-acid chain; its full sequence is Protein-glutamate methylesterase/protein-glutamine glutaminase (394 aa).

Positions 1-24 (MSDGFGRPPPPAPAGHPTGAAGGD) are disordered. The span at 15–24 (GHPTGAAGGD) shows a compositional bias: low complexity. A Response regulatory domain is found at 27–145 (RVMVVDDSAV…EIGGADAFKR (119 aa)). A 4-aspartylphosphate modification is found at D78. Positions 191–393 (PAPAVGSVGQ…PYIRKFASRA (203 aa)) constitute a CheB-type methylesterase domain. Active-site residues include S211, H238, and D335.

This sequence belongs to the CheB family. Phosphorylated by CheA. Phosphorylation of the N-terminal regulatory domain activates the methylesterase activity.

Its subcellular location is the cytoplasm. It catalyses the reaction [protein]-L-glutamate 5-O-methyl ester + H2O = L-glutamyl-[protein] + methanol + H(+). The catalysed reaction is L-glutaminyl-[protein] + H2O = L-glutamyl-[protein] + NH4(+). In terms of biological role, involved in chemotaxis. Part of a chemotaxis signal transduction system that modulates chemotaxis in response to various stimuli. Catalyzes the demethylation of specific methylglutamate residues introduced into the chemoreceptors (methyl-accepting chemotaxis proteins or MCP) by CheR. Also mediates the irreversible deamidation of specific glutamine residues to glutamic acid. In Azospirillum brasilense, this protein is Protein-glutamate methylesterase/protein-glutamine glutaminase.